Here is a 678-residue protein sequence, read N- to C-terminus: Methionine--tRNA ligase (678 aa).

The 'HIGH' region motif lies at 14–24; it reads PYANGSIHLGH. Zn(2+) contacts are provided by C145, C148, C158, and C161. A 'KMSKS' region motif is present at residues 331-335; sequence KMSKS. Residue K334 participates in ATP binding. Residues 576–678 enclose the tRNA-binding domain; sequence AFAAVDLRIA…SGAKPGQRVK (103 aa).

The protein belongs to the class-I aminoacyl-tRNA synthetase family. MetG type 1 subfamily. In terms of assembly, homodimer. Zn(2+) serves as cofactor.

The protein resides in the cytoplasm. It carries out the reaction tRNA(Met) + L-methionine + ATP = L-methionyl-tRNA(Met) + AMP + diphosphate. Is required not only for elongation of protein synthesis but also for the initiation of all mRNA translation through initiator tRNA(fMet) aminoacylation. This Pseudomonas aeruginosa (strain UCBPP-PA14) protein is Methionine--tRNA ligase.